A 432-amino-acid chain; its full sequence is Zinc finger protein 829 (432 aa).

A KRAB domain is found at 35–106; the sequence is VMFRDVSIDF…DRELTRGLCS (72 aa). Residues 156 to 178 form a C2H2-type 1 zinc finger; the sequence is WECKICGKTFNQNSQFIQHQRIH. A C2H2-type 2; degenerate zinc finger spans residues 184–206; that stretch reads YESKEYGKSFSRGSLVTRHQRIH. 8 C2H2-type zinc fingers span residues 212–234, 240–262, 268–290, 296–318, 324–346, 352–374, 380–402, and 408–430; these read YECKECGKAFSCSSYFSQHQRIH, YECKECGKAFKYCSNLNDHQRIH, YECKVCGKAFTKSSQLFLHLRIH, YECKECGKAFTQHSRLIQHQRMH, YECKQCGKAFNSASTLTNHHRIH, YECEECRKAFIQSSELIQHQRIH, YECNECGKAFNKGSNLTRHQRIH, and YDCKECGKAFGSRSDLIRHEGIH.

Belongs to the krueppel C2H2-type zinc-finger protein family.

The protein resides in the nucleus. May be involved in transcriptional regulation. The sequence is that of Zinc finger protein 829 (ZNF829) from Homo sapiens (Human).